We begin with the raw amino-acid sequence, 425 residues long: UDP-N-acetylglucosamine 1-carboxyvinyltransferase (425 aa).

31–32 (KN) is a phosphoenolpyruvate binding site. A UDP-N-acetyl-alpha-D-glucosamine-binding site is contributed by Arg-100. Cys-124 serves as the catalytic Proton donor. Residue Cys-124 is modified to 2-(S-cysteinyl)pyruvic acid O-phosphothioketal. UDP-N-acetyl-alpha-D-glucosamine contacts are provided by residues 129-133 (RPIDQ), 170-172 (TVT), Asp-311, and Ile-333.

This sequence belongs to the EPSP synthase family. MurA subfamily.

It localises to the cytoplasm. The enzyme catalyses phosphoenolpyruvate + UDP-N-acetyl-alpha-D-glucosamine = UDP-N-acetyl-3-O-(1-carboxyvinyl)-alpha-D-glucosamine + phosphate. It functions in the pathway cell wall biogenesis; peptidoglycan biosynthesis. Functionally, cell wall formation. Adds enolpyruvyl to UDP-N-acetylglucosamine. The chain is UDP-N-acetylglucosamine 1-carboxyvinyltransferase from Aquifex aeolicus (strain VF5).